The sequence spans 159 residues: Ribosomal RNA large subunit methyltransferase H (159 aa).

Residues L76, G108, and 127–132 (FSHMTF) contribute to the S-adenosyl-L-methionine site.

The protein belongs to the RNA methyltransferase RlmH family. Homodimer.

Its subcellular location is the cytoplasm. It carries out the reaction pseudouridine(1915) in 23S rRNA + S-adenosyl-L-methionine = N(3)-methylpseudouridine(1915) in 23S rRNA + S-adenosyl-L-homocysteine + H(+). In terms of biological role, specifically methylates the pseudouridine at position 1915 (m3Psi1915) in 23S rRNA. This is Ribosomal RNA large subunit methyltransferase H from Halothermothrix orenii (strain H 168 / OCM 544 / DSM 9562).